The primary structure comprises 250 residues: Probable ABC transporter permease protein BAB2_1148 (250 aa).

6 consecutive transmembrane segments (helical) span residues Leu12–Val32, Val63–Trp83, Trp94–Leu114, Ile122–Ile142, Val172–Ala192, and Leu211–Phe231. Positions Ile56–Leu236 constitute an ABC transmembrane type-1 domain.

This sequence belongs to the binding-protein-dependent transport system permease family. The complex is composed of two ATP-binding proteins (BAB2_1147), two transmembrane proteins (BAB2_1148) and a solute-binding protein (BAB2_1146).

The protein localises to the cell inner membrane. Its function is as follows. Probably part of an ABC transporter complex. Probably responsible for the translocation of the substrate across the membrane. The chain is Probable ABC transporter permease protein BAB2_1148 from Brucella abortus (strain 2308).